We begin with the raw amino-acid sequence, 896 residues long: Valine--tRNA ligase (896 aa).

Positions 48–58 match the 'HIGH' region motif; the sequence is PNVTGSLHMGH. Positions 543-547 match the 'KMSKS' region motif; the sequence is KMSKS. Residue lysine 546 coordinates ATP. Residues 830 to 896 are a coiled coil; it reads VIDLDAERTR…ARLGAALERL (67 aa).

The protein belongs to the class-I aminoacyl-tRNA synthetase family. ValS type 1 subfamily. As to quaternary structure, monomer.

It localises to the cytoplasm. The enzyme catalyses tRNA(Val) + L-valine + ATP = L-valyl-tRNA(Val) + AMP + diphosphate. Catalyzes the attachment of valine to tRNA(Val). As ValRS can inadvertently accommodate and process structurally similar amino acids such as threonine, to avoid such errors, it has a 'posttransfer' editing activity that hydrolyzes mischarged Thr-tRNA(Val) in a tRNA-dependent manner. This Granulibacter bethesdensis (strain ATCC BAA-1260 / CGDNIH1) protein is Valine--tRNA ligase.